The sequence spans 119 residues: Large ribosomal subunit protein bL20c (119 aa).

The protein belongs to the bacterial ribosomal protein bL20 family.

The protein localises to the plastid. It localises to the chloroplast. In terms of biological role, binds directly to 23S ribosomal RNA and is necessary for the in vitro assembly process of the 50S ribosomal subunit. It is not involved in the protein synthesizing functions of that subunit. This Saccharum hybrid (Sugarcane) protein is Large ribosomal subunit protein bL20c.